The chain runs to 217 residues: MWQPATERLQHFQTMLKSKLNVLTLKKEPIPAVLFHEPEAIELCTTTPLMKARTHSGCKVTYLGKVSTTGMQFLSGCTEKPVIELWKKHTLAREDVFPANALLEIRPFQVWLHHLDHKGEATVHMDTFQVARIAYCTADHNVSPNIFAWVYREINDDLSYQMDCHAVQCESKLEAKKLAHAMMEAFKKTFHSMKSDGRIHRSSSSEEASQELESDDG.

Residues Val60 to Gly217 enclose the PID domain. The interval Lys194 to Gly217 is disordered. Phosphoserine occurs at positions 202, 203, and 214. The span at Ala208–Gly217 shows a compositional bias: acidic residues.

Found in a complex with PID1/PCLI1, LRP1 and CUBNI. Interacts with LRP1 and CUBN.

It is found in the cytoplasm. Increases proliferation of preadipocytes without affecting adipocytic differentiation. This is PTB-containing, cubilin and LRP1-interacting protein (Pid1) from Mus musculus (Mouse).